The following is a 215-amino-acid chain: DNA repair and recombination protein RadB (215 aa).

Belongs to the eukaryotic RecA-like protein family. RadB subfamily.

Its function is as follows. Involved in DNA repair and in homologous recombination. May regulate the cleavage reactions of the branch-structured DNA. Has a very weak ATPase activity that is not stimulated by DNA. Binds DNA but does not promote DNA strands exchange. The sequence is that of DNA repair and recombination protein RadB from Methanococcus maripaludis (strain C7 / ATCC BAA-1331).